The primary structure comprises 125 residues: Small ribosomal subunit protein bS6 (125 aa).

Residues 97 to 125 (TEASPMKAAKEERKPLAEVENNDFEDAEE) form a disordered region. A compositionally biased stretch (basic and acidic residues) spans 104-113 (AAKEERKPLA). Residues 116–125 (ENNDFEDAEE) show a composition bias toward acidic residues.

The protein belongs to the bacterial ribosomal protein bS6 family.

In terms of biological role, binds together with bS18 to 16S ribosomal RNA. This Haemophilus influenzae (strain PittEE) protein is Small ribosomal subunit protein bS6.